The sequence spans 755 residues: Tryptophan 2-monooxygenase (755 aa).

Residues S247, E267, K275, and R295 each coordinate FMN. R295 is a substrate binding site.

It belongs to the tryptophan 2-monooxygenase family. FMN is required as a cofactor.

The enzyme catalyses L-tryptophan + O2 = indole-3-acetamide + CO2 + H2O. The protein operates within plant hormone metabolism; auxin biosynthesis. In Agrobacterium tumefaciens (strain Ach5), this protein is Tryptophan 2-monooxygenase (tms1).